Here is a 1162-residue protein sequence, read N- to C-terminus: Reticulon-4 (1162 aa).

An N-acetylmethionine modification is found at M1. The segment at 1-183 (MEDIDQSSLV…ALPAASEPVI (183 aa)) is disordered. Residues 1-988 (MEDIDQSSLV…LYWRDIKKTG (988 aa)) lie on the Cytoplasmic side of the membrane. S7 and S16 each carry phosphoserine. Positions 7-16 (SSLVSSSADS) are enriched in low complexity. Over residues 31–54 (EPEDEEDEEDEEEEEDDEDLEELE) the composition is skewed to acidic residues. The span at 85–99 (PPAPRGPLPAAPPTA) shows a compositional bias: pro residues. S105 is subject to Phosphoserine. A compositionally biased stretch (low complexity) spans 109-127 (SPAASAPSLPPAAAVLPSK). A phosphoserine mark is found at S145, S165, S167, S329, and S344. At T348 the chain carries Phosphothreonine. The span at 408–422 (SLEQKGHGKDSESRN) shows a compositional bias: basic and acidic residues. The segment at 408–432 (SLEQKGHGKDSESRNENASFPRTPE) is disordered. S426 bears the Phosphoserine mark. T430 carries the post-translational modification Phosphothreonine. 5 positions are modified to phosphoserine: S489, S690, S727, S768, and S832. The segment at 711-730 (ELVDDSSPESEPVDLFSDDS) is disordered. Residues 713-730 (VDDSSPESEPVDLFSDDS) show a composition bias toward acidic residues. Residue T834 is modified to Phosphothreonine. Phosphoserine occurs at positions 857 and 961. The Reticulon domain maps to 975-1162 (VVDLLYWRDI…KIPGLKRKAE (188 aa)). Residues 989–1009 (VVFGASLFLLLSLTVFSIVSV) form a helical membrane-spanning segment. The Lumenal portion of the chain corresponds to 1010–1078 (TAYIALALLS…VNSTIKELRR (69 aa)). N6-acetyllysine is present on K1074. The chain crosses the membrane as a helical span at residues 1079 to 1099 (LFLVDDLVDSLKFAVLMWVFT). The Cytoplasmic segment spans residues 1100 to 1162 (YVGALFNGLT…KIPGLKRKAE (63 aa)).

As to quaternary structure, binds to RTN4R. Interacts with ATL1. Interacts with TMEM170A. Interacts with RTN4IP1. In terms of assembly, interacts in trans with CNTNAP1. Interacts with REEP5. Interacts with GPR50. Interacts with synaptic plasticity regulator PANTS; the interaction results in enhanced RTN4-mediated inhibition of AMPA receptor clustering. Homodimer. Interacts with BAD/Bcl-xl and BCL2. Interact with RTN3. Interacts with NGBR. Interacts with SPTLC1. Interacts with GRAMD4. Interacts with CDH5. Interacts with BACE1 and BACE2. Interacts with REEP5. Interacts with RETREG3. As to quaternary structure, interacts with BACE1 and BACE2. Interacts with TMEM33. As to expression, expressed in cardiomyocytes (at protein level). Highly expressed in brain but not deteceted in aorta, femoral and carotid arteries. Main isoform expressed in neurons. In terms of tissue distribution, expressed in cardiomyocytes (at protein level). Expressed in splenocytes, T-cells, B-cells, bone marrow derived dendritic cells and macrophages (at protein level). Expressed in neurons. Highly expressed in endothelial cells and vascular smooth muscle cells, including blood vessels and mesenteric arteries. Expressed in bronchial and alveolar epithelial cells as well as vascular endothelial cells of lungs. Expressed in B-cells, bone marrow dendritic cells and macrophages (at protein level). As to expression, expressed in cardiomyocytes. In terms of tissue distribution, expressed at very low levels in neurons.

It localises to the endoplasmic reticulum membrane. It is found in the cell membrane. The protein resides in the synapse. Its subcellular location is the cell junction. Its function is as follows. Required to induce the formation and stabilization of endoplasmic reticulum (ER) tubules. They regulate membrane morphogenesis in the ER by promoting tubular ER production. They influence nuclear envelope expansion, nuclear pore complex formation and proper localization of inner nuclear membrane proteins. However each isoform have specific functions mainly depending on their tissue expression specificities. In terms of biological role, developmental neurite growth regulatory factor with a role as a negative regulator of axon-axon adhesion and growth, and as a facilitator of neurite branching. Regulates neurite fasciculation, branching and extension in the developing nervous system. Involved in down-regulation of growth, stabilization of wiring and restriction of plasticity in the adult CNS. Regulates the radial migration of cortical neurons via an RTN4R-LINGO1 containing receptor complex. Acts as a negative regulator of central nervous system angiogenesis. Inhibits spreading, migration and sprouting of primary brain microvascular endothelial cells (MVECs). Also induces the retraction of MVECs lamellipodia and filopodia in a ROCK pathway-dependent manner. Functionally, mainly function in endothelial cells and vascular smooth muscle cells, is also involved in immune system regulation. Modulator of vascular remodeling, promotes the migration of endothelial cells but inhibits the migration of vascular smooth muscle cells. Regulates endothelial sphingolipid biosynthesis with direct effects on vascular function and blood pressure. Inhibits serine palmitoyltransferase, SPTLC1, the rate-limiting enzyme of the novo sphingolipid biosynthetic pathway, thereby controlling production of endothelial sphingosine-1-phosphate (S1P). Required to promote macrophage homing and functions such as cytokine/chemokine gene expression involved in angiogenesis, arteriogenesis and tissue repair. Mediates ICAM1 induced transendothelial migration of leukocytes such as monocytes and neutrophils and acute inflammation. Necessary for immune responses triggered by nucleic acid sensing TLRs, such as TLR9, is required for proper TLR9 location to endolysosomes. Also involved in immune response to LPS. Plays a role in liver regeneration through the modulation of hepatocytes proliferation. Reduces the anti-apoptotic activity of Bcl-xl and Bcl-2. This is likely consecutive to their change in subcellular location, from the mitochondria to the endoplasmic reticulum, after binding and sequestration. With isoform C, inhibits BACE1 activity and amyloid precursor protein processing. Regulates cardiomyocyte apoptosis upon hypoxic conditions. With isoform B, inhibits BACE1 activity and amyloid precursor protein processing. The sequence is that of Reticulon-4 from Mus musculus (Mouse).